The sequence spans 326 residues: Meiotically up-regulated gene 113 protein (326 aa).

It is found in the cytoplasm. Functionally, has a role in meiosis. This chain is Meiotically up-regulated gene 113 protein (mug113), found in Schizosaccharomyces pombe (strain 972 / ATCC 24843) (Fission yeast).